Reading from the N-terminus, the 789-residue chain is Transducer protein Htr6 (789 aa).

Transmembrane regions (helical) follow at residues 29–49 (FAVAFIVVLVVIAGAGVFAFQ) and 294–314 (TVTVLVVLAVISLAIVGIALG). HAMP domains are found at residues 315 to 367 (RHTV…DRIQ) and 409 to 462 (ERLQ…ATIA). The 237-residue stretch at 481 to 717 (GAEEIETTSQ…SVVRRVDDVA (237 aa)) folds into the Methyl-accepting transducer domain. The tract at residues 763–789 (NQFETRADADEPDADTTVDASADDTGD) is disordered. Positions 772–789 (DEPDADTTVDASADDTGD) are enriched in acidic residues.

Belongs to the methyl-accepting chemotaxis (MCP) protein family. In terms of processing, methylated by CheR.

The protein resides in the cell membrane. Its function is as follows. Potentially involved in chemo- or phototactic signal transduction. In Halobacterium salinarum (strain ATCC 29341 / DSM 671 / R1), this protein is Transducer protein Htr6 (htr6).